A 143-amino-acid chain; its full sequence is Large ribosomal subunit protein uL15 (143 aa).

A disordered region spans residues 1 to 56; it reads MELNSIKPAEGSKHAKRRVGRGIGSGLGKTAGRGHKGQKSRSGGYHKVGFEGGQMP. Residues 21–31 show a composition bias toward gly residues; that stretch reads RGIGSGLGKTA.

It belongs to the universal ribosomal protein uL15 family. As to quaternary structure, part of the 50S ribosomal subunit.

Its function is as follows. Binds to the 23S rRNA. This is Large ribosomal subunit protein uL15 from Delftia acidovorans (strain DSM 14801 / SPH-1).